Reading from the N-terminus, the 583-residue chain is Laminarase-resistance protein LRE1 (583 aa).

Residues 1–24 are compositionally biased toward polar residues; it reads MPNTHTQHVQISEPNPVNTLSTPS. Disordered stretches follow at residues 1 to 31 and 330 to 380; these read MPNT…HRHR and LKDN…HMQH. 2 stretches are compositionally biased toward basic and acidic residues: residues 332–342 and 354–366; these read DNPRYAKDGYP and LDSD…SGES. 2 positions are modified to phosphoserine: Ser393 and Ser398. The disordered stretch occupies residues 457 to 486; the sequence is SCTPDGKEEMNRLKSNDSNEYSKSEGQIRT. Basic and acidic residues predominate over residues 461-479; it reads DGKEEMNRLKSNDSNEYSK. Phosphoserine is present on residues Ser516 and Ser552.

In terms of processing, phosphorylated by CDC28/CDK1.

Functionally, overexpression affects chitinase expression, cell separation and budding pattern, and increases trehalose accumulation and heat resistance by inhibiting protein kinase CBK1. Overexpression also suppresses temperature-induced hyperosmosensitivity and sensitivity to cell wall degrading enzymes. Overexpression of both LRE1 and PBN1 confers resistance to laminarinase. The chain is Laminarase-resistance protein LRE1 (LRE1) from Saccharomyces cerevisiae (strain ATCC 204508 / S288c) (Baker's yeast).